Here is a 439-residue protein sequence, read N- to C-terminus: Serine hydroxymethyltransferase (439 aa).

A disordered region spans residues 1 to 20; the sequence is MNAPHRDETTASHRDDGFFT. (6S)-5,6,7,8-tetrahydrofolate contacts are provided by residues Leu136 and 140-142; that span reads GHL. Position 245 is an N6-(pyridoxal phosphate)lysine (Lys245).

This sequence belongs to the SHMT family. In terms of assembly, homodimer. Pyridoxal 5'-phosphate serves as cofactor.

The protein localises to the cytoplasm. It catalyses the reaction (6R)-5,10-methylene-5,6,7,8-tetrahydrofolate + glycine + H2O = (6S)-5,6,7,8-tetrahydrofolate + L-serine. The protein operates within one-carbon metabolism; tetrahydrofolate interconversion. It functions in the pathway amino-acid biosynthesis; glycine biosynthesis; glycine from L-serine: step 1/1. Its function is as follows. Catalyzes the reversible interconversion of serine and glycine with tetrahydrofolate (THF) serving as the one-carbon carrier. This reaction serves as the major source of one-carbon groups required for the biosynthesis of purines, thymidylate, methionine, and other important biomolecules. Also exhibits THF-independent aldolase activity toward beta-hydroxyamino acids, producing glycine and aldehydes, via a retro-aldol mechanism. This is Serine hydroxymethyltransferase from Jannaschia sp. (strain CCS1).